A 424-amino-acid chain; its full sequence is Adenosylmethionine-8-amino-7-oxononanoate aminotransferase (424 aa).

Tryptophan 46 provides a ligand contact to substrate. Pyridoxal 5'-phosphate is bound at residue 106–107 (GS). Tyrosine 138 contributes to the substrate binding site. Aspartate 240 is a binding site for pyridoxal 5'-phosphate. Residues lysine 269 and glycine 303 each coordinate substrate. Lysine 269 bears the N6-(pyridoxal phosphate)lysine mark. 304-305 (HS) is a binding site for pyridoxal 5'-phosphate. A substrate-binding site is contributed by arginine 391.

The protein belongs to the class-III pyridoxal-phosphate-dependent aminotransferase family. BioA subfamily. Homodimer. Pyridoxal 5'-phosphate serves as cofactor.

It localises to the cytoplasm. The catalysed reaction is (8S)-8-amino-7-oxononanoate + S-adenosyl-L-methionine = S-adenosyl-4-methylsulfanyl-2-oxobutanoate + (7R,8S)-7,8-diammoniononanoate. The protein operates within cofactor biosynthesis; biotin biosynthesis; 7,8-diaminononanoate from 8-amino-7-oxononanoate (SAM route): step 1/1. Its function is as follows. Catalyzes the transfer of the alpha-amino group from S-adenosyl-L-methionine (SAM) to 7-keto-8-aminopelargonic acid (KAPA) to form 7,8-diaminopelargonic acid (DAPA). It is the only aminotransferase known to utilize SAM as an amino donor. Complements a bioU deletion in Synechocystis PCC 6803. The polypeptide is Adenosylmethionine-8-amino-7-oxononanoate aminotransferase (Synechococcus elongatus (strain ATCC 33912 / PCC 7942 / FACHB-805) (Anacystis nidulans R2)).